The following is a 76-amino-acid chain: ATP synthase subunit c (76 aa).

2 helical membrane-spanning segments follow: residues 13–33 and 55–75; these read LNVVGYGLAAIGPGIGLGILI and FLGLAFVEVLALLGFVAAFIF.

Belongs to the ATPase C chain family. F-type ATPases have 2 components, F(1) - the catalytic core - and F(0) - the membrane proton channel. F(1) has five subunits: alpha(3), beta(3), gamma(1), delta(1), epsilon(1). F(0) has three main subunits: a(1), b(2) and c(10-14). The alpha and beta chains form an alternating ring which encloses part of the gamma chain. F(1) is attached to F(0) by a central stalk formed by the gamma and epsilon chains, while a peripheral stalk is formed by the delta and b chains.

The protein localises to the cell membrane. Its function is as follows. F(1)F(0) ATP synthase produces ATP from ADP in the presence of a proton or sodium gradient. F-type ATPases consist of two structural domains, F(1) containing the extramembraneous catalytic core and F(0) containing the membrane proton channel, linked together by a central stalk and a peripheral stalk. During catalysis, ATP synthesis in the catalytic domain of F(1) is coupled via a rotary mechanism of the central stalk subunits to proton translocation. Key component of the F(0) channel; it plays a direct role in translocation across the membrane. A homomeric c-ring of between 10-14 subunits forms the central stalk rotor element with the F(1) delta and epsilon subunits. The protein is ATP synthase subunit c of Bifidobacterium animalis subsp. lactis (strain AD011).